A 190-amino-acid polypeptide reads, in one-letter code: Large ribosomal subunit protein uL5 (190 aa).

Belongs to the universal ribosomal protein uL5 family. As to quaternary structure, part of the 50S ribosomal subunit; contacts the 5S rRNA and probably tRNA. Forms a bridge to the 30S subunit in the 70S ribosome.

This is one of the proteins that bind and probably mediate the attachment of the 5S RNA into the large ribosomal subunit, where it forms part of the central protuberance. In the 70S ribosome it contacts protein S13 of the 30S subunit (bridge B1b), connecting the 2 subunits; this bridge is implicated in subunit movement. May contact the P site tRNA; the 5S rRNA and some of its associated proteins might help stabilize positioning of ribosome-bound tRNAs. The polypeptide is Large ribosomal subunit protein uL5 (Methanocaldococcus jannaschii (strain ATCC 43067 / DSM 2661 / JAL-1 / JCM 10045 / NBRC 100440) (Methanococcus jannaschii)).